Consider the following 119-residue polypeptide: Ribosome-binding factor A (119 aa).

This sequence belongs to the RbfA family. Monomer. Binds 30S ribosomal subunits, but not 50S ribosomal subunits or 70S ribosomes.

It is found in the cytoplasm. One of several proteins that assist in the late maturation steps of the functional core of the 30S ribosomal subunit. Associates with free 30S ribosomal subunits (but not with 30S subunits that are part of 70S ribosomes or polysomes). Required for efficient processing of 16S rRNA. May interact with the 5'-terminal helix region of 16S rRNA. The sequence is that of Ribosome-binding factor A from Ligilactobacillus salivarius (strain UCC118) (Lactobacillus salivarius).